A 303-amino-acid chain; its full sequence is HTH-type transcriptional regulator CatM (303 aa).

Positions 1–58 (MELRHLRYFVTVVEEQSISKAAEKLCIAQPPLSRQIQKLEEELGIQLFERGFRPAKVT) constitute an HTH lysR-type domain. Residues 18-37 (ISKAAEKLCIAQPPLSRQIQ) constitute a DNA-binding region (H-T-H motif). Serine 99 and threonine 128 together coordinate cis,cis-muconate.

It belongs to the LysR transcriptional regulatory family. Homotetramer in solution.

Its function is as follows. Positively regulates the expression of catA, catBCIJFD and benPK in response to cis,cis-muconate. It binds to the catB-catM intercistronic region, to a specific sequence upstream of catA and to the benPK promoter region. Can also repress pca genes. In Acinetobacter baylyi (strain ATCC 33305 / BD413 / ADP1), this protein is HTH-type transcriptional regulator CatM (catM).